A 317-amino-acid polypeptide reads, in one-letter code: F-box protein FBW2 (317 aa).

The 48-residue stretch at 7-54 folds into the F-box domain; sequence FRHWDELIPDALGLIFSHLPLQEVLTVVPRVCKAWNRAVTGPYCWQEI.

As to quaternary structure, part of a SCF (SKP1-cullin-F-box) protein ligase complex. Interacts with CUL1, CUL2 and SPK1B/ASK2.

The protein resides in the nucleus. Its pathway is protein modification; protein ubiquitination. Component of SCF(ASK-cullin-F-box) E3 ubiquitin ligase complexes, which may mediate the ubiquitination and subsequent proteasomal degradation of target proteins. The sequence is that of F-box protein FBW2 (FBW2) from Arabidopsis thaliana (Mouse-ear cress).